The chain runs to 327 residues: Complex I intermediate-associated protein 30, mitochondrial (327 aa).

The N-terminal 24 residues, 1–24 (MALVHKLLRGTYFLRKFXKPTSAL), are a transit peptide targeting the mitochondrion. The interval 42 to 63 (PVASPGKASSQRKTEGDLQGDH) is disordered. A compositionally biased stretch (basic and acidic residues) spans 53-63 (RKTEGDLQGDH). Residue S318 is modified to Phosphoserine.

Belongs to the CIA30 family. As to quaternary structure, part of the mitochondrial complex I assembly/MCIA complex that comprises at least the core subunits TMEM126B, NDUFAF1, ECSIT and ACAD9 and complement subunits such as COA1 and TMEM186. Interacts with ECSIT. Interacts with ACAD9. At early stages of complex I assembly, it is found in intermediate subcomplexes that contain different subunits including NDUFB6, NDUFA6, NDUFA9, NDUFS3, NDUFS7, ND1, ND2 and ND3. Interacts with TMEM70 and TMEM242.

Its subcellular location is the mitochondrion. The protein localises to the mitochondrion matrix. In terms of biological role, as part of the MCIA complex, involved in the assembly of the mitochondrial complex I. This chain is Complex I intermediate-associated protein 30, mitochondrial, found in Pan troglodytes (Chimpanzee).